We begin with the raw amino-acid sequence, 333 residues long: MTENSDKVPIALVGPDDVEFCGPPAYATVTVKPSGPARLLKVGAVVLISGAVLLLFGAIGAFYLWKGSDNHIYNVHYTMSINGKLQDGSMEIDARNNLETFKMGSGAEEAIEVNDFQNGITGIRFAGGEKCYIKAQVKARVPEVGTVTQQSISSELEGKIMPVKHEEEALVWVAVGQPVQDNSFLSARVLELCGDLPIFWLKPTYPKEIQRERREVVRKTVPTTTKRPHSGPRGNPGPARMRNDSRPSVQEDSEPFNPDNPYHQEGESMTFDPRLDHEGICCIECRRSYTHCQKICEPLGGYNPWPYNYQGCRSACRVVMPCSWWVARILGMV.

The helical transmembrane segment at 42-62 (VGAVVLISGAVLLLFGAIGAF) threads the bilayer. One can recognise a BRICHOS domain in the interval 104-201 (GSGAEEAIEV…LCGDLPIFWL (98 aa)). Cysteine 131 and cysteine 193 are disulfide-bonded. Positions 211–214 (RERR) are excised as a propeptide. The disordered stretch occupies residues 212 to 269 (ERREVVRKTVPTTTKRPHSGPRGNPGPARMRNDSRPSVQEDSEPFNPDNPYHQEGESM). A glycan (N-linked (GlcNAc...) asparagine) is linked at asparagine 243. Disulfide bonds link cysteine 281–cysteine 285, cysteine 282–cysteine 322, cysteine 292–cysteine 316, and cysteine 296–cysteine 312.

Belongs to the chondromodulin-1 family. In terms of processing, after cleavage, the post-translationally modified ChM-I is secreted as a glycoprotein.

The protein localises to the secreted. Its subcellular location is the extracellular space. It localises to the extracellular matrix. It is found in the endomembrane system. Its function is as follows. Bifunctional growth regulator that stimulates the growth of cultured chondrocytes in the presence of basic fibroblast growth factor (FGF) but inhibits the growth of cultured vascular endothelial cells. May contribute to the rapid growth of cartilage and vascular invasion prior to the replacement of cartilage by bone during endochondral bone development. Inhibits in vitro tube formation and mobilization of endothelial cells. Plays a role as antiangiogenic factor in cardiac valves to suppress neovascularization. In Oryctolagus cuniculus (Rabbit), this protein is Leukocyte cell-derived chemotaxin 1.